Consider the following 431-residue polypeptide: MNASHQDTGFFTEALSERDPELFGAITSELGRQRDEIELIASENIVSAAVMQAQGSVMTNKYAEGYPGRRYYGGCQYVDIAENLAIERAKQLFGCGFANVQPNSGSQANQGVFQALIKPGDTILGMSLDAGGHLTHGAAPNQSGKWFNAVQYGVRQQDNLLDYDQVEALAKEHRPKLIIAGGSAIPRQIDFARMREIADMVGAYLHVDMAHFAGLVAAGEHPSPFPHAHVATTTTHKTLRGPRGGMILTNDEDIAKKVNSAIFPGIQGGPLMHVIAAKAVAFGEALRPEFKTYIQQVIANAQALSDQLIKGGLDTVTHGTDTHVVLVDLRPKGVKGNATEKALGRAHITCNKNGVPFDPEKPTVTSGIRLGSPAGTTRGFAETEFRQIADWIIEVVDGLAANGEDANEAVEDKVKAQVAALCAKFPIYPNL.

(6S)-5,6,7,8-tetrahydrofolate-binding positions include Leu128 and 132 to 134; that span reads GHL. Lys237 is subject to N6-(pyridoxal phosphate)lysine.

This sequence belongs to the SHMT family. Homodimer. Pyridoxal 5'-phosphate is required as a cofactor.

It localises to the cytoplasm. The enzyme catalyses (6R)-5,10-methylene-5,6,7,8-tetrahydrofolate + glycine + H2O = (6S)-5,6,7,8-tetrahydrofolate + L-serine. Its pathway is one-carbon metabolism; tetrahydrofolate interconversion. The protein operates within amino-acid biosynthesis; glycine biosynthesis; glycine from L-serine: step 1/1. Functionally, catalyzes the reversible interconversion of serine and glycine with tetrahydrofolate (THF) serving as the one-carbon carrier. This reaction serves as the major source of one-carbon groups required for the biosynthesis of purines, thymidylate, methionine, and other important biomolecules. Also exhibits THF-independent aldolase activity toward beta-hydroxyamino acids, producing glycine and aldehydes, via a retro-aldol mechanism. This Ruegeria pomeroyi (strain ATCC 700808 / DSM 15171 / DSS-3) (Silicibacter pomeroyi) protein is Serine hydroxymethyltransferase.